Consider the following 312-residue polypeptide: Large ribosomal subunit protein uL10 (312 aa).

Lys14 is covalently cross-linked (Glycyl lysine isopeptide (Lys-Gly) (interchain with G-Cter in ubiquitin)). A Phosphoserine modification is found at Ser68. Glycyl lysine isopeptide (Lys-Gly) (interchain with G-Cter in ubiquitin) cross-links involve residues Lys97 and Lys144. An interaction with P1A-P2B region spans residues 199-230 (SSILDITDEELVSHFVSAVSTIASISLAIGYP). Positions 231-258 (TLPSVGHTLINNYKDLLAVAIAASYHYP) are interaction with P1B-P2A. The span at 278 to 293 (PAATSAASGDAAPAEE) shows a compositional bias: low complexity. The tract at residues 278 to 312 (PAATSAASGDAAPAEEAAAEEEEESDDDMGFGLFD) is disordered. The span at 294–306 (AAAEEEEESDDDM) shows a compositional bias: acidic residues. Residue Ser302 is modified to Phosphoserine; by CK2.

It belongs to the universal ribosomal protein uL10 family. As to quaternary structure, component of the large ribosomal subunit (LSU). Mature yeast ribosomes consist of a small (40S) and a large (60S) subunit. The 40S small subunit contains 1 molecule of ribosomal RNA (18S rRNA) and 33 different proteins (encoded by 57 genes). The large 60S subunit contains 3 rRNA molecules (25S, 5.8S and 5S rRNA) and 46 different proteins (encoded by 81 genes). The 5 acidic ribosomal P-proteins form the stalk structure of the 60S subunit. They are organized as a pentameric complex in which uL10/P0 interacts with 2 heterodimers, P1A-P2B and P1B-P2A. uL10 directly interacts with 28S rRNA. uL10 interacts with YFL034W.

Its subcellular location is the cytoplasm. Component of the ribosome, a large ribonucleoprotein complex responsible for the synthesis of proteins in the cell. The small ribosomal subunit (SSU) binds messenger RNAs (mRNAs) and translates the encoded message by selecting cognate aminoacyl-transfer RNA (tRNA) molecules. The large subunit (LSU) contains the ribosomal catalytic site termed the peptidyl transferase center (PTC), which catalyzes the formation of peptide bonds, thereby polymerizing the amino acids delivered by tRNAs into a polypeptide chain. The nascent polypeptides leave the ribosome through a tunnel in the LSU and interact with protein factors that function in enzymatic processing, targeting, and the membrane insertion of nascent chains at the exit of the ribosomal tunnel. uL10 forms part of the P stalk that participates in recruiting G proteins to the ribosome. The chain is Large ribosomal subunit protein uL10 from Saccharomyces cerevisiae (strain ATCC 204508 / S288c) (Baker's yeast).